The sequence spans 264 residues: Thymidylate synthase (264 aa).

Arg-21 serves as a coordination point for dUMP. His-51 provides a ligand contact to (6R)-5,10-methylene-5,6,7,8-tetrahydrofolate. Residue 126–127 participates in dUMP binding; the sequence is RR. Residue Cys-146 is the Nucleophile of the active site. Residues 166-169, Asn-177, and 207-209 contribute to the dUMP site; these read RSAD and HLY. (6R)-5,10-methylene-5,6,7,8-tetrahydrofolate is bound at residue Asp-169. Ala-263 provides a ligand contact to (6R)-5,10-methylene-5,6,7,8-tetrahydrofolate.

Belongs to the thymidylate synthase family. Bacterial-type ThyA subfamily. As to quaternary structure, homodimer.

It is found in the cytoplasm. It catalyses the reaction dUMP + (6R)-5,10-methylene-5,6,7,8-tetrahydrofolate = 7,8-dihydrofolate + dTMP. The protein operates within pyrimidine metabolism; dTTP biosynthesis. Functionally, catalyzes the reductive methylation of 2'-deoxyuridine-5'-monophosphate (dUMP) to 2'-deoxythymidine-5'-monophosphate (dTMP) while utilizing 5,10-methylenetetrahydrofolate (mTHF) as the methyl donor and reductant in the reaction, yielding dihydrofolate (DHF) as a by-product. This enzymatic reaction provides an intracellular de novo source of dTMP, an essential precursor for DNA biosynthesis. The protein is Thymidylate synthase of Methylobacterium nodulans (strain LMG 21967 / CNCM I-2342 / ORS 2060).